Consider the following 155-residue polypeptide: Peptide deformylase (155 aa).

C88 and H130 together coordinate Fe cation. E131 is a catalytic residue. H134 serves as a coordination point for Fe cation.

This sequence belongs to the polypeptide deformylase family. Fe(2+) is required as a cofactor.

It carries out the reaction N-terminal N-formyl-L-methionyl-[peptide] + H2O = N-terminal L-methionyl-[peptide] + formate. In terms of biological role, removes the formyl group from the N-terminal Met of newly synthesized proteins. Requires at least a dipeptide for an efficient rate of reaction. N-terminal L-methionine is a prerequisite for activity but the enzyme has broad specificity at other positions. This chain is Peptide deformylase, found in Pelotomaculum thermopropionicum (strain DSM 13744 / JCM 10971 / SI).